The primary structure comprises 156 residues: Succinate dehydrogenase assembly factor 2-B, mitochondrial (156 aa).

The transit peptide at 1-24 (MLRQFIVSTVGRRLQLPMMAQSRL) directs the protein to the mitochondrion.

Belongs to the SDHAF2 family. As to quaternary structure, interacts with the flavoprotein subunit within the SDH catalytic dimer.

The protein resides in the mitochondrion matrix. In terms of biological role, plays an essential role in the assembly of succinate dehydrogenase (SDH), an enzyme complex (also referred to as respiratory complex II) that is a component of both the tricarboxylic acid (TCA) cycle and the mitochondrial electron transport chain, and which couples the oxidation of succinate to fumarate with the reduction of ubiquinone (coenzyme Q) to ubiquinol. Required for flavinylation (covalent attachment of FAD) of the flavoprotein subunit of the SDH catalytic dimer. The polypeptide is Succinate dehydrogenase assembly factor 2-B, mitochondrial (Drosophila melanogaster (Fruit fly)).